The sequence spans 156 residues: Adult-specific rigid cuticular protein 15.5 (156 aa).

Positions 23–84 (IGNYAFNYGT…SVKTNEPGTA (62 aa)) constitute a Chitin-binding type R&amp;R domain.

Functionally, component of the rigid cuticle of the spider. In Araneus diadematus (European garden spider), this protein is Adult-specific rigid cuticular protein 15.5.